The following is a 225-amino-acid chain: UPF0758 protein Shew185_0376 (225 aa).

The MPN domain maps to 102–224; sequence VLTNPDLTRD…IVSFAERGWI (123 aa). Residues histidine 173, histidine 175, and aspartate 186 each contribute to the Zn(2+) site. The JAMM motif motif lies at 173–186; it reads HNHPSGNAEPSQAD.

This sequence belongs to the UPF0758 family.

This chain is UPF0758 protein Shew185_0376, found in Shewanella baltica (strain OS185).